A 151-amino-acid polypeptide reads, in one-letter code: Large-conductance mechanosensitive channel (151 aa).

2 consecutive transmembrane segments (helical) span residues 12–32 (GNIV…ALVT) and 71–91 (VLLS…FLVV). The segment at 122 to 151 (AQTNGDSPGRHGGRGTPSPTDGPRASTESQ) is disordered.

It belongs to the MscL family. In terms of assembly, homopentamer.

The protein resides in the cell membrane. Channel that opens in response to stretch forces in the membrane lipid bilayer. May participate in the regulation of osmotic pressure changes within the cell. The protein is Large-conductance mechanosensitive channel of Mycobacterium tuberculosis (strain CDC 1551 / Oshkosh).